The following is a 481-amino-acid chain: Flavonol 3-O-glucosyltransferase UGT71C1 (481 aa).

Residue His-19 is the Proton acceptor of the active site. An an anthocyanidin-binding site is contributed by His-19. Asp-131 acts as the Charge relay in catalysis. UDP-alpha-D-glucose contacts are provided by Thr-153, Ala-352, Gln-354, His-369, Trp-372, Asn-373, Ser-374, and Glu-377. Ala-392 is a binding site for an anthocyanidin. Glu-393 and Gln-394 together coordinate UDP-alpha-D-glucose.

It belongs to the UDP-glycosyltransferase family.

It carries out the reaction a flavonol + UDP-alpha-D-glucose = a flavonol 3-O-beta-D-glucoside + UDP + H(+). The catalysed reaction is a 7-O-hydroxy-flavonol + UDP-alpha-D-glucose = a flavonol 7-O-beta-D-glucoside + UDP + H(+). Its function is as follows. Possesses quercetin 7-O-glucosyltransferase and 3'-O-glucosyltransferase activities in vitro. Also active in vitro on benzoates and benzoate derivatives. Glucosylates other secondary metabolites in vitro like trans-resveratrol, curcumin, vanillin and etoposide. The polypeptide is Flavonol 3-O-glucosyltransferase UGT71C1 (Arabidopsis thaliana (Mouse-ear cress)).